Consider the following 299-residue polypeptide: MALLVRVLRNQTSISQWVPVCSRLIPVSPTQGQGDRALSRTSQWPQMSQSRACGGSEQIPGIDIQLNRKYHTTRKLSTTKDSPQPVEEKVGAFTKIIEAMGFTGPLKYSKWKIKIAALRMYTSCVEKTDFEEFFLRCQMPDTFNSWFLITLLHVWMCLVRMKQEGRSGKYMCRIIVHFMWEDVQQRGRVMGVNPYILKKNMILMTNHFYAAILGYDEGILSDDHGLAAALWRTFFNRKCEDPRHLELLVEYVRKQIQYLDSMNGEDLLLTGEVSWRPLVEKNPQSILKPHSPTYNDEGL.

Belongs to the CBP3 family. Interacts with UQCC2. Interacts with UQCC3. Forms a complex, named COMB/coordinator of mitochondrial CYTB biogenesis, composed of UQCC1, UQCC2, UQCC4, UQCC5 and UQCC6; stabilizes nascent cytochrome b/MT-CYB and promotes its membrane insertion. Forms a complex, named COMB/coordinator of mitochondrial CYTB biogenesis, composed of UQCC1, UQCC2, UQCC4, UQCC5 and UQCC6; stabilizes nascent cytochrome b/MT-CYB and promotes its membrane insertion. Forms a complex, named COMA, composed of UQCC1, UQCC2 and UQCC4; activates MT-CYB translation. Forms a complex, named COMC, composed of UQCC1, UQCC2; UQCC3 and UQCC4; mediates MT-CYB hemylation and association with the first nuclear-encoded CIII subunit UQCRQ.

Its subcellular location is the mitochondrion inner membrane. It is found in the cytoplasmic vesicle. Its function is as follows. Required for the assembly of the ubiquinol-cytochrome c reductase complex (mitochondrial respiratory chain complex III or cytochrome b-c1 complex). Involved in cytochrome b translation and/or stability. This chain is Ubiquinol-cytochrome c reductase complex assembly factor 1 (UQCC1), found in Homo sapiens (Human).